Reading from the N-terminus, the 774-residue chain is 1,4-alpha-glucan branching enzyme GlgB 1 (774 aa).

A disordered region spans residues M1–D66. The segment covering K29 to R40 has biased composition (basic residues). The segment covering R41 to S55 has biased composition (low complexity). D457 serves as the catalytic Nucleophile. Catalysis depends on E510, which acts as the Proton donor. Residues Y748–G774 form a disordered region.

It belongs to the glycosyl hydrolase 13 family. GlgB subfamily. In terms of assembly, monomer.

It catalyses the reaction Transfers a segment of a (1-&gt;4)-alpha-D-glucan chain to a primary hydroxy group in a similar glucan chain.. It participates in glycan biosynthesis; glycogen biosynthesis. In terms of biological role, catalyzes the formation of the alpha-1,6-glucosidic linkages in glycogen by scission of a 1,4-alpha-linked oligosaccharide from growing alpha-1,4-glucan chains and the subsequent attachment of the oligosaccharide to the alpha-1,6 position. In Streptomyces coelicolor (strain ATCC BAA-471 / A3(2) / M145), this protein is 1,4-alpha-glucan branching enzyme GlgB 1 (glgB1).